The primary structure comprises 685 residues: MQDIQLDTLLSEDVTPENASQVMQALSQSLNEHNIRYYVDDAPSITDSEYDRLMQRLLKLEALYPHLIVADSPTQRVGGLALAKFDQITHLKPMLSLDNAFDEADFSAFHKRVTDKVGEVSFCCEPKLDGLAVSILYRHGVLERAATRGDGSVGEDITENVKTIKSIPLKLRGNDFPELVEVRGEAFMPKAAFEALNDRARAKDEKLFVNPRNAAAGSLRQLDSKITAARSLAFYAYALGVVEPDSHPLAKTHFEQLQQLKSWGLPVSSEIKVCAELSQVYDYYKDILTRRSDLAFEIDGVVMKVNDIDQQQRLGFVAKSPRWAIAYKFPAQEEMTLLEGVDFQVGRTGAVTPVARLKPVFVGGVTVSNATLHNANEIARLGIKVGDTVIIRRAGDVIPQIVAIVPERRPETATDIVFPHNCPVCGSLVERLEGEAVARCSGGLFCEAQRKEAIKHFASRKALDIDGMGDKVVEQLIDKELVQSPADLFKLTASMMTMLDRMGMKSATNLAAAIEAAKTTTLARFLYALGIREVGEATAANLAAHFASLDALRVATVEQLTEVEDVGAVVAQHVAHFFAQPHNLEVIDALIAAGVHWPAIEAPSAEAQPLKGQTWVLTGTLNQLNRNDAKAQLQALGAKVAGSVSKNTDCLVAGEAAGSKLAKAQELGVKVMDEDELLALLAANA.

NAD(+) contacts are provided by residues 47 to 51, 96 to 97, and Glu-125; these read DSEYD and SL. Lys-127 serves as the catalytic N6-AMP-lysine intermediate. Residues Arg-148, Glu-185, Lys-304, and Lys-328 each coordinate NAD(+). Residues Cys-422, Cys-425, Cys-440, and Cys-446 each contribute to the Zn(2+) site. The 81-residue stretch at 605–685 folds into the BRCT domain; that stretch reads AEAQPLKGQT…ELLALLAANA (81 aa).

It belongs to the NAD-dependent DNA ligase family. LigA subfamily. Mg(2+) serves as cofactor. Mn(2+) is required as a cofactor.

It catalyses the reaction NAD(+) + (deoxyribonucleotide)n-3'-hydroxyl + 5'-phospho-(deoxyribonucleotide)m = (deoxyribonucleotide)n+m + AMP + beta-nicotinamide D-nucleotide.. Its function is as follows. DNA ligase that catalyzes the formation of phosphodiester linkages between 5'-phosphoryl and 3'-hydroxyl groups in double-stranded DNA using NAD as a coenzyme and as the energy source for the reaction. It is essential for DNA replication and repair of damaged DNA. This chain is DNA ligase, found in Shewanella baltica (strain OS223).